The sequence spans 190 residues: DNA-binding transcriptional repressor TetR (190 aa).

Residues 6–66 (ETRSAALLAV…AALDAHDASF (61 aa)) enclose the HTH tetR-type domain. Residues 29–48 (SMDSVAALAHASKTTIYRRW) constitute a DNA-binding region (H-T-H motif).

In terms of assembly, homodimer.

Its function is as follows. Binds to its own palindromic promoter and represses transcription of its operon; addition of tetracycline or doxycycline (but not tigecycline) interferes with DNA binding. Addition of TetX to the DNA-TetR-antibiotic complex restores DNA binding. This is DNA-binding transcriptional repressor TetR from Mycobacteroides abscessus (strain ATCC 19977 / DSM 44196 / CCUG 20993 / CIP 104536 / JCM 13569 / NCTC 13031 / TMC 1543 / L948) (Mycobacterium abscessus).